The following is a 171-amino-acid chain: MDRAEKAEAVSSLNATLSNAASVVIVRNLGLTVAQSTVLRQQMRDAGANFRVTKNRLAKIALDGTSYTGIGELLTGPTAIASSTDPVAAAKIAVEFAKTNDKLEIVGGGMGDVILDVEGVKALASLPSLDELRGKLVGLLQAPATKVAQIAAAPAGQLARVFGAYGAKEAA.

The protein belongs to the universal ribosomal protein uL10 family. Part of the ribosomal stalk of the 50S ribosomal subunit. The N-terminus interacts with L11 and the large rRNA to form the base of the stalk. The C-terminus forms an elongated spine to which L12 dimers bind in a sequential fashion forming a multimeric L10(L12)X complex.

Forms part of the ribosomal stalk, playing a central role in the interaction of the ribosome with GTP-bound translation factors. The protein is Large ribosomal subunit protein uL10 of Sphingopyxis alaskensis (strain DSM 13593 / LMG 18877 / RB2256) (Sphingomonas alaskensis).